Reading from the N-terminus, the 851-residue chain is B-box type zinc finger protein ncl-1 (851 aa).

Residues 71 to 91 (GFGFGSPSSTTSSSPPLSNSP) are disordered. The segment covering 76–91 (SPSSTTSSSPPLSNSP) has biased composition (low complexity). The B box-type 1; atypical zinc finger occupies 127–174 (VPAVHCSGCKSNETATSFCQDCNANLCDNCTMAHKFMHCFADHRVVSL). Residues Cys-132, Cys-135, Cys-156, and His-160 each coordinate Zn(2+). A compositionally biased stretch (low complexity) spans 176-197 (TPGTGSSSSSTSSSSSASSTSS). Residues 176–211 (TPGTGSSSSSTSSSSSASSTSSHQVPSLGGKQSPDS) form a disordered region. The B box-type 2 zinc finger occupies 218-261 (KRSVLCLQHRASELVFFCVSCNLAICRDCTVSDHPSGTHQYELI). 4 residues coordinate Zn(2+): Cys-223, His-226, Cys-246, and His-251. Residues 303–331 (SLHNAHAQLEETVSNLINVIQDQKKTLAK) are a coiled coil. NHL repeat units follow at residues 573 to 616 (HCKF…FDKE), 620 to 665 (KFQF…YNQY), 666 to 707 (GQFL…FDMF), 708 to 750 (GNIL…FSYE), and 751 to 794 (GQYL…FSQD).

In terms of tissue distribution, present in cells in which nucleoli are absent, and absent from large cells in which nucleoli are prominent. Highly expressed in the gonads.

The protein localises to the cytoplasm. In terms of biological role, translational repressor that inhibits protein synthesis. Represses the translation of mRNAs such as fib-1, probably by being recruited by RNA-binding protein nos-2 and the Pumilio proteins puf-5, puf-8 and puf-9 to the consensus core PUF binding motif in the 3'-UTR of fib-1 mRNA. Negatively regulates ribosomal RNA (rRNA) synthesis, ribosomal protein synthesis and nucleolus size. Its role in the negative regulation of nucleolus size is most likely through its negative regulation of the translation of proteins such as the rRNA 2'-O-methyltransferase fib-1, and dao-5. Might act directly as a transcription factor to inhibit RNA polymerase I (rRNA) and III (5S RNA) transcription. Plays a role in embryonic development, and in particular, is involved in regulating the localization of proteins, such as par-2, that are required for embryonic cell polarity. Plays a role in the regulation of lifespan, and the response to nutrient availability. The chain is B-box type zinc finger protein ncl-1 from Caenorhabditis elegans.